The primary structure comprises 376 residues: Partitioning defective 6 homolog gamma (376 aa).

In terms of domain architecture, PB1 spans 18 to 98; the sequence is AVEVKSKFGA…PLLRVFIQKR (81 aa). The segment at 127-254 is interaction with PARD3 and CDC42; it reads RRRAHLDIGL…VTVKPANQRN (128 aa). Positions 134-151 constitute a Pseudo-CRIB domain; that stretch reads IGLPRDFRPVSSIIDVDL. A PDZ domain is found at 158–251; the sequence is RVRLHRHGCE…NLIVTVKPAN (94 aa). The segment at 356 to 376 is disordered; it reads PRHSLALPPGGVEEHGPAVTL. Residues 367 to 376 are compositionally biased toward basic and acidic residues; the sequence is VEEHGPAVTL.

The protein belongs to the PAR6 family. As to quaternary structure, interacts with PARD3. Interacts with GTP-bound forms of CDC42, RHOQ/TC10 and RAC1. Interacts with the N-terminal part of PRKCI and PRKCZ. In terms of tissue distribution, widely expressed, with a higher expression in fetal and adult kidney.

It localises to the cytoplasm. The protein resides in the cell membrane. Its subcellular location is the cell junction. The protein localises to the tight junction. Its function is as follows. Adapter protein involved in asymmetrical cell division and cell polarization processes. May play a role in the formation of epithelial tight junctions. The PARD6-PARD3 complex links GTP-bound Rho small GTPases to atypical protein kinase C proteins. This chain is Partitioning defective 6 homolog gamma (PARD6G), found in Homo sapiens (Human).